Reading from the N-terminus, the 1077-residue chain is Eukaryotic translation initiation factor 2-alpha kinase pek-1 (1077 aa).

An N-terminal signal peptide occupies residues 1-23 (MSVYYIVLAGFLLFMALVPFNAG). At 24 to 453 (QQYIDDDIEV…ITLMQTIFSY (430 aa)) the chain is on the lumenal side. A glycan (N-linked (GlcNAc...) asparagine) is linked at asparagine 206. Residues 454-474 (IFNPTAVVSFLAGLIGVTVAV) form a helical membrane-spanning segment. At 475–1077 (VYNKIAKSSP…HEVATHKFLQ (603 aa)) the chain is on the cytoplasmic side. One can recognise a Protein kinase domain in the interval 604 to 1076 (FEVKKVIGHG…AHEVATHKFL (473 aa)). Residues 610-618 (IGHGGFGVV) and lysine 633 contribute to the ATP site. The tract at residues 727–834 (MPPVVGNTTD…FVDGSDDVDN (108 aa)) is disordered. A compositionally biased stretch (polar residues) spans 732 to 746 (GNTTDAENSWSTSAK). The span at 766 to 778 (GSDRTTAELKEES) shows a compositional bias: basic and acidic residues. Acidic residues predominate over residues 783-796 (ESDEESDTTEDSSS). Over residues 797 to 808 (SDESPSSSSGSS) the composition is skewed to low complexity. Aspartate 933 serves as the catalytic Proton acceptor.

This sequence belongs to the protein kinase superfamily. Ser/Thr protein kinase family. GCN2 subfamily. In terms of assembly, forms dimers with HSPA5/BIP in resting cells. Oligomerizes in ER-stressed cells. Autophosphorylated. Post-translationally, N-glycosylated. In terms of tissue distribution, expressed in intestinal cells.

It is found in the endoplasmic reticulum membrane. The catalysed reaction is L-seryl-[protein] + ATP = O-phospho-L-seryl-[protein] + ADP + H(+). It carries out the reaction L-threonyl-[protein] + ATP = O-phospho-L-threonyl-[protein] + ADP + H(+). With respect to regulation, perturbation in protein folding in the endoplasmic reticulum (ER) promotes reversible dissociation from HSPA5/BIP and oligomerization, resulting in transautophosphorylation and kinase activity induction. Its function is as follows. Phosphorylates the alpha subunit of eukaryotic translation-initiation factor 2 (eIF2alpha), leading to its inactivation and thus to a rapid reduction of translational initiation and repression of global protein synthesis. May phosphorylate eIF2alpha during hypoxia. Proposed to have a role in alleviating endoplasmic reticulum stress. This Caenorhabditis elegans protein is Eukaryotic translation initiation factor 2-alpha kinase pek-1 (pek-1).